A 427-amino-acid polypeptide reads, in one-letter code: Enolase 2 (427 aa).

Residue Gln-165 coordinates (2R)-2-phosphoglycerate. Residue Glu-207 is the Proton donor of the active site. 3 residues coordinate Mg(2+): Asp-244, Glu-287, and Asp-314. (2R)-2-phosphoglycerate-binding residues include Lys-339, Arg-368, Ser-369, and Lys-390. Catalysis depends on Lys-339, which acts as the Proton acceptor.

This sequence belongs to the enolase family. Component of the RNA degradosome, a multiprotein complex involved in RNA processing and mRNA degradation. The cofactor is Mg(2+).

The protein resides in the cytoplasm. Its subcellular location is the secreted. It localises to the cell surface. The enzyme catalyses (2R)-2-phosphoglycerate = phosphoenolpyruvate + H2O. It functions in the pathway carbohydrate degradation; glycolysis; pyruvate from D-glyceraldehyde 3-phosphate: step 4/5. Its function is as follows. Catalyzes the reversible conversion of 2-phosphoglycerate (2-PG) into phosphoenolpyruvate (PEP). It is essential for the degradation of carbohydrates via glycolysis. The polypeptide is Enolase 2 (Pseudomonas syringae pv. syringae (strain B728a)).